We begin with the raw amino-acid sequence, 141 residues long: Nucleoside diphosphate kinase (141 aa).

ATP is bound by residues Lys-11, Phe-59, Arg-87, Thr-93, Arg-104, and Asn-114. His-117 serves as the catalytic Pros-phosphohistidine intermediate.

This sequence belongs to the NDK family. In terms of assembly, homotetramer. Mg(2+) is required as a cofactor.

Its subcellular location is the cytoplasm. It catalyses the reaction a 2'-deoxyribonucleoside 5'-diphosphate + ATP = a 2'-deoxyribonucleoside 5'-triphosphate + ADP. The catalysed reaction is a ribonucleoside 5'-diphosphate + ATP = a ribonucleoside 5'-triphosphate + ADP. Functionally, major role in the synthesis of nucleoside triphosphates other than ATP. The ATP gamma phosphate is transferred to the NDP beta phosphate via a ping-pong mechanism, using a phosphorylated active-site intermediate. The sequence is that of Nucleoside diphosphate kinase from Cellvibrio japonicus (strain Ueda107) (Pseudomonas fluorescens subsp. cellulosa).